Here is a 271-residue protein sequence, read N- to C-terminus: Aquaporin-2 (271 aa).

Over 1–11 (MWELRSIAFSR) the chain is Cytoplasmic. A helical transmembrane segment spans residues 12 to 32 (AVLAEFLATLLFVFFGLGSAL). The Extracellular segment spans residues 33–40 (NWPQALPS). The helical transmembrane segment at 41–59 (VLQIAMAFGLAIGTLVQAL) threads the bilayer. The Cytoplasmic portion of the chain corresponds to 60–64 (GHVSG). An intramembrane region (discontinuously helical) is located at residues 65-74 (AHINPAVTVA). The NPA 1 motif lies at 68-70 (NPA). Topologically, residues 75–85 (CLVGCHVSFLR) are cytoplasmic. Residues 86 to 107 (AVFYVAAQLLGAVAGAALLHEI) traverse the membrane as a helical segment. At 108 to 127 (TPPAIRGDLAVNALNNNSTA) the chain is on the extracellular side. Asn123 carries N-linked (GlcNAc...) asparagine glycosylation. A helical membrane pass occupies residues 128-148 (GQAVTVELFLTLQLVLCIFAS). The Cytoplasmic portion of the chain corresponds to 149-156 (TDERRGDN). The chain crosses the membrane as a helical span at residues 157–176 (VGTPALSIGFSVALGHLLGI). Residues 177-180 (HYTG) are Extracellular-facing. The discontinuously helical intramembrane region spans 181–193 (CSMNPARSLAPAI). Residues 184–186 (NPA) carry the NPA 2 motif. Topologically, residues 194–201 (VTGKFDDH) are extracellular. The helical transmembrane segment at 202-222 (WVFWIGPLVGAIVASLLYNYV) threads the bilayer. Topologically, residues 223 to 271 (LFPPAKSLSERLAVLKGLEPDTDWEEREVRRRQSVELHSPQSLPRGSKA) are cytoplasmic. The disordered stretch occupies residues 251 to 271 (VRRRQSVELHSPQSLPRGSKA). Ser256 carries the phosphoserine modification. Residues 261 to 271 (SPQSLPRGSKA) show a composition bias toward polar residues.

It belongs to the MIP/aquaporin (TC 1.A.8) family. In terms of assembly, homotetramer. Post-translationally, ser-256 phosphorylation is necessary and sufficient for expression at the apical membrane. Endocytosis is not phosphorylation-dependent. N-glycosylated.

The protein localises to the apical cell membrane. It localises to the basolateral cell membrane. It is found in the cell membrane. The protein resides in the cytoplasmic vesicle membrane. Its subcellular location is the golgi apparatus. The protein localises to the trans-Golgi network membrane. It catalyses the reaction H2O(in) = H2O(out). The enzyme catalyses glycerol(in) = glycerol(out). In terms of biological role, forms a water-specific channel that provides the plasma membranes of renal collecting duct with high permeability to water, thereby permitting water to move in the direction of an osmotic gradient. Could also be permeable to glycerol. This is Aquaporin-2 from Bos taurus (Bovine).